The chain runs to 365 residues: Cobalt-precorrin-5B C(1)-methyltransferase (365 aa).

This sequence belongs to the CbiD family.

It catalyses the reaction Co-precorrin-5B + S-adenosyl-L-methionine = Co-precorrin-6A + S-adenosyl-L-homocysteine. It functions in the pathway cofactor biosynthesis; adenosylcobalamin biosynthesis; cob(II)yrinate a,c-diamide from sirohydrochlorin (anaerobic route): step 6/10. Catalyzes the methylation of C-1 in cobalt-precorrin-5B to form cobalt-precorrin-6A. The protein is Cobalt-precorrin-5B C(1)-methyltransferase of Clostridium perfringens (strain ATCC 13124 / DSM 756 / JCM 1290 / NCIMB 6125 / NCTC 8237 / Type A).